The primary structure comprises 211 residues: Large ribosomal subunit protein uL3 (211 aa).

At Q150 the chain carries N5-methylglutamine.

The protein belongs to the universal ribosomal protein uL3 family. Part of the 50S ribosomal subunit. Forms a cluster with proteins L14 and L19. Post-translationally, methylated by PrmB.

Functionally, one of the primary rRNA binding proteins, it binds directly near the 3'-end of the 23S rRNA, where it nucleates assembly of the 50S subunit. In Pseudomonas putida (strain GB-1), this protein is Large ribosomal subunit protein uL3.